Here is a 580-residue protein sequence, read N- to C-terminus: Acyl-coenzyme A synthetase ACSM3, mitochondrial (580 aa).

A mitochondrion-targeting transit peptide spans 1–21 (MVMLLRARCFQRLAIPDPMRV). Residues Lys67 and Lys100 each carry the N6-succinyllysine modification. Lys151 carries the N6-acetyllysine modification. Residues 229–237 (TSGTTGPPK), 368–373 (EGYGQT), Asp455, Arg470, and Lys566 each bind ATP.

This sequence belongs to the ATP-dependent AMP-binding enzyme family. Requires Mg(2+) as cofactor. It depends on Mn(2+) as a cofactor. In terms of tissue distribution, detected in kidney (at protein level). Detected in kidney proximal tubules and in liver. Detected at low levels in testis, stomach, heart and lung.

The protein localises to the mitochondrion. It localises to the mitochondrion matrix. It catalyses the reaction a medium-chain fatty acid + ATP + CoA = a medium-chain fatty acyl-CoA + AMP + diphosphate. The catalysed reaction is propanoate + ATP + CoA = propanoyl-CoA + AMP + diphosphate. The enzyme catalyses butanoate + ATP + CoA = butanoyl-CoA + AMP + diphosphate. It carries out the reaction 2-methylpropanoate + ATP + CoA = 2-methylpropanoyl-CoA + AMP + diphosphate. It catalyses the reaction 2-methylbutanoate + ATP + CoA = 2-methylbutanoyl-CoA + AMP + diphosphate. The catalysed reaction is octanoate + ATP + CoA = octanoyl-CoA + AMP + diphosphate. Catalyzes the activation of fatty acids by CoA to produce an acyl-CoA, the first step in fatty acid metabolism. Capable of activating medium-chain fatty acids with a preference for isobutyrate among fatty acids with 2-6 carbon atoms. This is Acyl-coenzyme A synthetase ACSM3, mitochondrial (Acsm3) from Mus musculus (Mouse).